The sequence spans 348 residues: 11-beta-hydroxysteroid dehydrogenase A (348 aa).

A helical; Signal-anchor for type II membrane protein transmembrane segment spans residues 10–30; the sequence is LIAPPFTFFFLLFFLPPFQIF. A Proline-knob motif is present at residues 13 to 26; that stretch reads PPFTFFFLLFFLPP. NADP(+) contacts are provided by residues 54 to 80, Asp-105, and 132 to 135; these read GASSGIGESLAYEYAKRGACLVLAARR and NAGI. Ser-184 lines the substrate pocket. The Proton acceptor role is filled by Tyr-197. Residues 197–201 and Lys-201 each bind NADP(+); that span reads YNASK.

The protein belongs to the short-chain dehydrogenases/reductases (SDR) family. In terms of tissue distribution, expressed in seeds (at protein level). Not expressed in stem, leaf or root (at protein level).

The protein resides in the lipid droplet. The protein localises to the membrane. It catalyses the reaction an 11beta-hydroxysteroid + NADP(+) = an 11-oxosteroid + NADPH + H(+). The catalysed reaction is an 11beta-hydroxysteroid + NAD(+) = an 11-oxosteroid + NADH + H(+). It carries out the reaction corticosterone + NADP(+) = 11-dehydrocorticosterone + NADPH + H(+). The enzyme catalyses corticosterone + NAD(+) = 11-dehydrocorticosterone + NADH + H(+). It catalyses the reaction 17beta-estradiol + NADP(+) = estrone + NADPH + H(+). The catalysed reaction is 17beta-estradiol + NAD(+) = estrone + NADH + H(+). Has dehydrogenase activity against corticosterone (11 beta-hydroxysteroid) and estradiol (17 beta-hydroxysteroid), with higher activity against estradiol. Possesses higher dehydrogenase activity with NADP(+) than NAD(+) regardless of the sterol substrate. May be involved in signal transduction regulated by various sterols. The sequence is that of 11-beta-hydroxysteroid dehydrogenase A from Sesamum indicum (Oriental sesame).